A 197-amino-acid polypeptide reads, in one-letter code: Small ribosomal subunit protein uS4c (197 aa).

The S4 RNA-binding domain occupies 85–157; the sequence is MRLDNILFRL…LQLFTGKELA (73 aa).

This sequence belongs to the universal ribosomal protein uS4 family. In terms of assembly, part of the 30S ribosomal subunit. Contacts protein S5. The interaction surface between S4 and S5 is involved in control of translational fidelity.

The protein resides in the plastid. One of the primary rRNA binding proteins, it binds directly to 16S rRNA where it nucleates assembly of the body of the 30S subunit. Functionally, with S5 and S12 plays an important role in translational accuracy. This chain is Small ribosomal subunit protein uS4c (rps4), found in Cuscuta gronovii (Common dodder).